Consider the following 322-residue polypeptide: Atrochrysone carboxyl ACP thioesterase nsrC (322 aa).

Zn(2+)-binding residues include H105, H107, D109, and H110. D109 functions as the Proton donor/acceptor in the catalytic mechanism.

The protein belongs to the metallo-beta-lactamase superfamily. Zn(2+) serves as cofactor.

The enzyme catalyses atrochrysone carboxyl-[ACP] + H2O = atrochrysone carboxylate + holo-[ACP] + H(+). It participates in secondary metabolite biosynthesis. Functionally, atrochrysone carboxyl ACP thioesterase; part of the gene cluster that mediates the biosynthesis of the tetrahydroxanthone dimer neosartorin, which exhibits antibacterial activity. The two different monomeric units appear to be synthesized by the same set of enzymes, among which the Baeyer-Villiger monooxygenase nsrF is the key enzyme for the divergence of the biosynthetic routes. The pathway begins with the synthesis of atrochrysone thioester by the polyketide synthase nsrB. The atrochrysone carboxyl ACP thioesterase nsrC then breaks the thioester bond and releases the atrochrysone carboxylic acid from AacuL. Atrochrysone carboxylic acid is decarboxylated by the decarboxylase nsrE, and oxidized by the anthrone oxygenase nsrD to yield emodin. Emodin is then reduced to emodin hydroquinone by the oxidoreductase nsrR. A-ring reduction by the short chain dehydrogenase nsrJ, dehydration by the scytalone dehydratase-like protein nsrI and probable spontaneous re-oxidation, results in overall deoxygenation to chrysophanol. The Baeyer-Villiger monooxygenase nsrF accepts chrysophanol as a substrate to insert one oxygen atom at two different positions to yield the precursors of both monomric units. NsrF is promiscuous/flexible in interacting with the 2 (non methylated and methylated) aromatic rings of chrysophanol, thus diverging the biosynthetic pathway at this point. After the hydrolysis of the lactones, methylesterification by the methyltransferase nsrG yields respectively moniliphenone and 2,2',6'-trihydroxy-4-methyl-6-methoxya-cyldiphenylmethanone. The next steps are the hydroxylation by the FAD-dependent monooxygenase nsrK, followed by isomerization by the monooxygenase nsrQ. The short chain dehydrogenase/reductase nsrO then catalyzes the C-5 ketoreduction to give the xanthone skeleton of blennolide C and 5-acetylblennolide A. The acetyltransferase nsrL has a strict substrate specificity and uses only blennolide A but not blennolide C to yield 5-acetylblennolide A as the single-acetylated product. In the final step of the biosynthesis, the heterodimerization of the 2 xanthones, blennolide C and 5-acetylblennolide A, is catalyzed by the cytochrome P450 monooxygenase nsrP. NsrP can utilize at least three different xanthones as its substrates to perform the dimerization reaction. This is Atrochrysone carboxyl ACP thioesterase nsrC from Aspergillus novofumigatus (strain IBT 16806).